A 469-amino-acid polypeptide reads, in one-letter code: Calcium-binding mitochondrial carrier protein SCaMC-2-A (469 aa).

Residues 1 to 189 (MLCLCLYVPV…EHLTGMWWRH (189 aa)) are Mitochondrial intermembrane-facing. 3 consecutive EF-hand domains span residues 47–80 (TYRRWRKKSLKTEEKEHDGQLDFEEFVHYLQDHE), 78–113 (DHEKDLKLVFKSMDRKIAGQVNANDIVNSLRDLGVH), and 114–149 (ISLKQAEKVLKSMDKNGTMTIDWNEWKKYPTLQPAE). Ca(2+) is bound by residues aspartate 64, glutamine 66, and glutamate 71. Solcar repeat units follow at residues 184–270 (GMWW…IKRV), 278–363 (LGIS…LKNT), and 375–463 (PGVF…IKST). A helical transmembrane segment spans residues 190–207 (LVSGGGAGAVSRTCTAPL). The Mitochondrial matrix portion of the chain corresponds to 208-244 (DRLKVLMQVHGCQGKSMCLMSGLTQMIKEGGVRSLWR). The helical transmembrane segment at 245 to 264 (GNGINVIKIAPETALKFMAY) threads the bilayer. The Mitochondrial intermembrane portion of the chain corresponds to 265–287 (EQIKRVMGSSQETLGISERFVAG). Residues 288–301 (SLAGVIAQSTIYPM) traverse the membrane as a helical segment. Residues 302-337 (EVLKTRLALRKTGQYKGISDCAKHILKTEGMSAFYK) are Mitochondrial matrix-facing. Residues 338–357 (GYVPNMLGIIPYAGIDLAVY) form a helical membrane-spanning segment. Over 358-380 (ETLKNTWLQRYGTENADPGVFVL) the chain is Mitochondrial intermembrane. The chain crosses the membrane as a helical span at residues 381 to 398 (LACGTVSSTCGQLASYPL). The Mitochondrial matrix portion of the chain corresponds to 399-437 (ALIRTRMQAQASVEGSSQVSMTGLFKQIMKTEGPTGLYR). The chain crosses the membrane as a helical span at residues 438-457 (GLTPNFLKVIPAVSISYVVY). Residues 458 to 469 (EHIKSTLGVRSR) are Mitochondrial intermembrane-facing.

This sequence belongs to the mitochondrial carrier (TC 2.A.29) family.

The protein localises to the mitochondrion inner membrane. Calcium-dependent mitochondrial solute carrier. The protein is Calcium-binding mitochondrial carrier protein SCaMC-2-A (slc25a25a) of Danio rerio (Zebrafish).